The sequence spans 124 residues: Large ribosomal subunit protein uL18 (124 aa).

Belongs to the universal ribosomal protein uL18 family. Part of the 50S ribosomal subunit; part of the 5S rRNA/L5/L18/L25 subcomplex. Contacts the 5S and 23S rRNAs.

Functionally, this is one of the proteins that bind and probably mediate the attachment of the 5S RNA into the large ribosomal subunit, where it forms part of the central protuberance. The polypeptide is Large ribosomal subunit protein uL18 (Desulfosudis oleivorans (strain DSM 6200 / JCM 39069 / Hxd3) (Desulfococcus oleovorans)).